The following is a 1227-amino-acid chain: ATP-dependent helicase/nuclease subunit A (1227 aa).

A UvrD-like helicase ATP-binding domain is found at 3–477 (VKYTPDQARA…IIFAENFRSS (475 aa)). Residue 24-31 (ASAGSGKT) participates in ATP binding. Residues 505-788 (GQLKFAAGYD…KLMTIHASKG (284 aa)) enclose the UvrD-like helicase C-terminal domain.

It belongs to the helicase family. AddA subfamily. In terms of assembly, heterodimer of AddA and AddB/RexB. The cofactor is Mg(2+).

The enzyme catalyses Couples ATP hydrolysis with the unwinding of duplex DNA by translocating in the 3'-5' direction.. It carries out the reaction ATP + H2O = ADP + phosphate + H(+). The heterodimer acts as both an ATP-dependent DNA helicase and an ATP-dependent, dual-direction single-stranded exonuclease. Recognizes the chi site generating a DNA molecule suitable for the initiation of homologous recombination. The AddA nuclease domain is required for chi fragment generation; this subunit has the helicase and 3' -&gt; 5' nuclease activities. The protein is ATP-dependent helicase/nuclease subunit A of Lactobacillus delbrueckii subsp. bulgaricus (strain ATCC 11842 / DSM 20081 / BCRC 10696 / JCM 1002 / NBRC 13953 / NCIMB 11778 / NCTC 12712 / WDCM 00102 / Lb 14).